The following is a 76-amino-acid chain: Kappa-actitoxin-Avd4n (76 aa).

The signal sequence occupies residues 1 to 19 (MNKAFFLCLVVLCAAVVFA). Positions 20 to 31 (AEDLQKGKHAPF) are excised as a propeptide. 2 cysteine pairs are disulfide-bonded: C37-C72 and C39-C65.

It belongs to the sea anemone type 3 (BDS) potassium channel toxin family. Lacks the conventional Cys residue at position 55. Thus, only 2 disulfide are possible present. In terms of tissue distribution, experimental results show no expression in the ectodermal tissue from the distal and proximal tentacles, body wall, and oral disk. Since paralogs are expressed in this tissue, an expression of this toxin in this tissue is probable. The negative results could be explained by the very low abundance of EST sequences.

It localises to the secreted. Its subcellular location is the nematocyst. Functionally, blocks Kv3 voltage-gated potassium channels. Reduces blood pressure. The protein is Kappa-actitoxin-Avd4n of Anemonia viridis (Snakelocks anemone).